Reading from the N-terminus, the 63-residue chain is Large ribosomal subunit protein uL29 (63 aa).

This sequence belongs to the universal ribosomal protein uL29 family.

This chain is Large ribosomal subunit protein uL29, found in Pseudoalteromonas translucida (strain TAC 125).